The chain runs to 333 residues: MQHNQLLEQLYSGHSLSTSESTALFNAVIQGELSNEQIAAMLIALKVRGANTEEITGAVAASLQNAKVFPRPDYPFADIVGTGGDGQNTINISTASAIVAASMGAKVAKHGNRSVSSKSGASDVLTALGVNVNVTLEQARQALDEIGVCFLFAQQYHSGFRHVAPVRAALKTHTIFNILGPLINPARPTYHLLGVYAPELVKTYAETAVALEHQHSFVVHGSGLDEVALHGETQVAEIKNGKIEYFTLTPEDFGLKTQSLESLRGGEPQENTQYLTALLQGKGKAEHANAVAANTALLLKLFGYDDLKQNVQNVLAHLVSGKAFETLQKLTTY.

5-phospho-alpha-D-ribose 1-diphosphate contacts are provided by residues Gly-81, 84–85 (GD), Thr-89, 91–94 (NIST), 109–117 (KHGNRSVSS), and Ala-121. Residue Gly-81 coordinates anthranilate. Ser-93 provides a ligand contact to Mg(2+). Asn-112 serves as a coordination point for anthranilate. Residue Arg-167 participates in anthranilate binding. Asp-225 and Glu-226 together coordinate Mg(2+).

This sequence belongs to the anthranilate phosphoribosyltransferase family. As to quaternary structure, homodimer. Mg(2+) serves as cofactor.

The catalysed reaction is N-(5-phospho-beta-D-ribosyl)anthranilate + diphosphate = 5-phospho-alpha-D-ribose 1-diphosphate + anthranilate. It participates in amino-acid biosynthesis; L-tryptophan biosynthesis; L-tryptophan from chorismate: step 2/5. In terms of biological role, catalyzes the transfer of the phosphoribosyl group of 5-phosphorylribose-1-pyrophosphate (PRPP) to anthranilate to yield N-(5'-phosphoribosyl)-anthranilate (PRA). In Haemophilus influenzae (strain PittEE), this protein is Anthranilate phosphoribosyltransferase.